A 1057-amino-acid polypeptide reads, in one-letter code: MDLLDKVMGEMGSKPGSTAKKPATSASSTPRTNVWGTAKKPSSQQQPPKPLFTTPGSQQGSLGGRIPKREHTDRTGPDPKRKPLGGLSVPDSFNNFGTFRVQMNAWNLDISKMDERISRIMFRATLVHTDGRRFELSLGVSAFSGDVNRQQRRQAQCLLFRAWFKRNPELFKGMTDPAIAAYDAAETIYVGCSFFDVELTEHVCHLTEADFSPQEWKIVSLISRRSGSTFEIRIKTNPPIYTRGPNALTLENRSELTRIIEAITDQCLHNEKFLLYSSGTFPTKGGDIASPDEVTLIKSGFVKTTKIVDRDGVPDAIMTVDTTKSPFYKDTSLLKFFTAKMDQLTNSGGGPRGHNGGRERRDGGGNSRKYDDRRSPRDGEIDYDERTVSHYQRQFQDERISDGMLNTLKQSLKGLDCQPIHLKDSKANRSIMIDEIHTGTADSVTFEQKLPDGEMKLTSITEYYLQRYNYRLKFPHLPLVTSKRAKCYDFYPMELMSILPGQRIKQSHMTVDIQSYMTGKMSSLPDQHIKQSKLVLTEYLKLGDQPANRQMDAFRVSLKSIQPIVTNAHWLSPPDMKFANNQLYSLNPTRGVRFQTNGKFVMPARVKSVTIINYDKEFNRNVDMFAEGLAKHCSEQGMKFDSRPNSWKKVNLGSSDRRGTKVEIEEAIRNGVTIVFGIIAEKRPDMHDILKYFEEKLGQQTIQISSETADKFMRDHGGKQTIDNVIRKLNPKCGGTNFLIDVPESVGHRVVCNNSAEMRAKLYAKTQFIGFEMSHTGARTRFDIQKVMFDGDPTVVGVAYSLKHSAQLGGFSYFQESRLHKLTNLQEKMQICLNAYEQSSSYLPETVVVYRVGSGEGDYPQIVNEVNEMKLAARKKKHGYNPKFLVICTQRNSHIRVFPEHINERGKSMEQNVKSGTCVDVPGASHGYEEFILCCQTPLIGTVKPTKYTIIVNDCRWSKNEIMNVTYHLAFAHQVSYAPPAIPNVSYAAQNLAKRGHNNYKTHTKLVDMNDYSYRIKEKHEEIISSEEVDDILMRDFIETVSNDLNAMTINGRNFWA.

Disordered regions lie at residues 1 to 89 and 344 to 388; these read MDLL…GLSV and LTNS…ERTV. Positions 17 to 30 are enriched in low complexity; sequence STAKKPATSASSTP. Composition is skewed to basic and acidic residues over residues 67 to 81 and 356 to 388; these read PKRE…DPKR and GGRE…ERTV. A PAZ domain is found at 387–500; it reads TVSHYQRQFQ…YPMELMSILP (114 aa). In terms of domain architecture, Piwi spans 677–1001; it reads GIIAEKRPDM…LAKRGHNNYK (325 aa).

The protein localises to the cytoplasm. Its subcellular location is the nucleus. In terms of biological role, transports small interfering RNAs (siRNAs) from the cytoplasm to the nucleus. Required for RNA interference (RNAi) in nuclei. Required for exogenous RNAi-induced H3K27 methylation. The sequence is that of Nuclear RNAi defective-3 protein (nrde-3) from Caenorhabditis elegans.